Consider the following 1012-residue polypeptide: Klotho (1012 aa).

An N-terminal signal peptide occupies residues 1 to 33; the sequence is MPASAPPRRPRPPPPSLSLLLVLLGLGGRRLRA. The Extracellular segment spans residues 34–981; the sequence is EPGDGAQTWA…ECSFFHTRKS (948 aa). Glycosyl hydrolase-1 regions lie at residues 57–506 and 515–953; these read FQGT…KNGF and LEGT…SNGF. N-linked (GlcNAc...) asparagine glycans are attached at residues asparagine 106, asparagine 159, asparagine 283, asparagine 344, asparagine 607, asparagine 612, and asparagine 694. A helical membrane pass occupies residues 982–1002; the sequence is LLAFIAFLFFASIISLSLIFY. Topologically, residues 1003 to 1012 are cytoplasmic; sequence YSKKGRRSYK.

The protein belongs to the glycosyl hydrolase 1 family. Klotho subfamily. Homodimer. Interacts with FGF23 and FGFR1. Post-translationally, N-glycosylated. In terms of tissue distribution, present in cortical renal tubules (at protein level). Soluble peptide is present in serum and cerebrospinal fluid. Expressed in kidney, placenta, small intestine and prostate. Down-regulated in renal cell carcinomas, hepatocellular carcinomas, and in chronic renal failure kidney.

It is found in the cell membrane. It localises to the apical cell membrane. Its subcellular location is the secreted. The enzyme catalyses a beta-D-glucuronoside + H2O = D-glucuronate + an alcohol. May have weak glycosidase activity towards glucuronylated steroids. However, it lacks essential active site Glu residues at positions 239 and 872, suggesting it may be inactive as a glycosidase in vivo. May be involved in the regulation of calcium and phosphorus homeostasis by inhibiting the synthesis of active vitamin D. Essential factor for the specific interaction between FGF23 and FGFR1. Functionally, the Klotho peptide generated by cleavage of the membrane-bound isoform may be an anti-aging circulating hormone which would extend life span by inhibiting insulin/IGF1 signaling. The chain is Klotho (KL) from Homo sapiens (Human).